Consider the following 211-residue polypeptide: ATP phosphoribosyltransferase (211 aa).

Belongs to the ATP phosphoribosyltransferase family. Short subfamily. Heteromultimer composed of HisG and HisZ subunits.

The protein resides in the cytoplasm. It carries out the reaction 1-(5-phospho-beta-D-ribosyl)-ATP + diphosphate = 5-phospho-alpha-D-ribose 1-diphosphate + ATP. It participates in amino-acid biosynthesis; L-histidine biosynthesis; L-histidine from 5-phospho-alpha-D-ribose 1-diphosphate: step 1/9. Catalyzes the condensation of ATP and 5-phosphoribose 1-diphosphate to form N'-(5'-phosphoribosyl)-ATP (PR-ATP). Has a crucial role in the pathway because the rate of histidine biosynthesis seems to be controlled primarily by regulation of HisG enzymatic activity. This Pseudomonas aeruginosa (strain UCBPP-PA14) protein is ATP phosphoribosyltransferase.